Here is a 391-residue protein sequence, read N- to C-terminus: tRNA-specific 2-thiouridylase MnmA (391 aa).

ATP contacts are provided by residues 9–16 (GMSGGVDS) and methionine 35. The segment at 95–97 (NPD) is interaction with target base in tRNA. The Nucleophile role is filled by cysteine 100. A disulfide bridge connects residues cysteine 100 and cysteine 196. Residue glycine 124 coordinates ATP. An interaction with tRNA region spans residues 146 to 148 (KDQ). The active-site Cysteine persulfide intermediate is the cysteine 196. The segment at 308-309 (RY) is interaction with tRNA.

The protein belongs to the MnmA/TRMU family.

It is found in the cytoplasm. The enzyme catalyses S-sulfanyl-L-cysteinyl-[protein] + uridine(34) in tRNA + AH2 + ATP = 2-thiouridine(34) in tRNA + L-cysteinyl-[protein] + A + AMP + diphosphate + H(+). In terms of biological role, catalyzes the 2-thiolation of uridine at the wobble position (U34) of tRNA, leading to the formation of s(2)U34. This Burkholderia cenocepacia (strain HI2424) protein is tRNA-specific 2-thiouridylase MnmA.